A 203-amino-acid polypeptide reads, in one-letter code: CASP-like protein 2U5 (203 aa).

Residues 1-31 are Cytoplasmic-facing; that stretch reads MSEHRIPVAADKQISPPISAGEQKGCKGLKR. Residues 32-52 form a helical membrane-spanning segment; it reads TDLMLRFAAFVCCAVTMVVLI. Residues 53–84 are Extracellular-facing; it reads TDKQTSAIQVPGFNNLTITKTVSFDLAKAFVY. N67 carries N-linked (GlcNAc...) asparagine glycosylation. The helical transmembrane segment at 85 to 105 threads the bilayer; that stretch reads LVSAAGIGAGYTLLVLVLSII. Topologically, residues 106 to 111 are cytoplasmic; the sequence is SAERSK. A helical transmembrane segment spans residues 112 to 132; the sequence is AIAWFIFVFDQLITYVLLAAA. Residues 133 to 164 lie on the Extracellular side of the membrane; it reads AASTEVAYMGAHAPPEASWLKVCSLFGRFCHQ. The helical transmembrane segment at 165 to 185 threads the bilayer; sequence LGASLVTSFISTVLFAFSAAI. At 186–203 the chain is on the cytoplasmic side; the sequence is SAYYLFSNTNVRPAYSKG.

Belongs to the Casparian strip membrane proteins (CASP) family. In terms of assembly, homodimer and heterodimers.

Its subcellular location is the cell membrane. The sequence is that of CASP-like protein 2U5 from Selaginella moellendorffii (Spikemoss).